Reading from the N-terminus, the 372-residue chain is UDP-N-acetylglucosamine--N-acetylmuramyl-(pentapeptide) pyrophosphoryl-undecaprenol N-acetylglucosamine transferase (372 aa).

Residues 11–13 (TAG), Asn-123, Arg-160, Ser-200, and Gln-298 contribute to the UDP-N-acetyl-alpha-D-glucosamine site.

The protein belongs to the glycosyltransferase 28 family. MurG subfamily.

The protein localises to the cell membrane. The enzyme catalyses di-trans,octa-cis-undecaprenyl diphospho-N-acetyl-alpha-D-muramoyl-L-alanyl-D-glutamyl-meso-2,6-diaminopimeloyl-D-alanyl-D-alanine + UDP-N-acetyl-alpha-D-glucosamine = di-trans,octa-cis-undecaprenyl diphospho-[N-acetyl-alpha-D-glucosaminyl-(1-&gt;4)]-N-acetyl-alpha-D-muramoyl-L-alanyl-D-glutamyl-meso-2,6-diaminopimeloyl-D-alanyl-D-alanine + UDP + H(+). It participates in cell wall biogenesis; peptidoglycan biosynthesis. In terms of biological role, cell wall formation. Catalyzes the transfer of a GlcNAc subunit on undecaprenyl-pyrophosphoryl-MurNAc-pentapeptide (lipid intermediate I) to form undecaprenyl-pyrophosphoryl-MurNAc-(pentapeptide)GlcNAc (lipid intermediate II). The protein is UDP-N-acetylglucosamine--N-acetylmuramyl-(pentapeptide) pyrophosphoryl-undecaprenol N-acetylglucosamine transferase of Cutibacterium acnes (strain DSM 16379 / KPA171202) (Propionibacterium acnes).